The chain runs to 673 residues: Sodium/myo-inositol cotransporter 2 (673 aa).

Residues 1–27 lie on the Extracellular side of the membrane; it reads MESATISPQPPQSDSLEAFPQKSMEPA. Residues 28–48 traverse the membrane as a helical segment; sequence DIAVLVLYFLFVLAVGLWSTV. Over 49 to 65 the chain is Cytoplasmic; sequence RTKRDTVKGYFLAGGDM. A helical membrane pass occupies residues 66-88; it reads VWWPVGASLFASNVGSGHFIGLA. Residues 89–102 are Extracellular-facing; it reads GSGAAVGISVAAYE. A helical membrane pass occupies residues 103–123; that stretch reads LNGLFSVLMLAWVFLPIYIAG. Topologically, residues 124 to 148 are cytoplasmic; that stretch reads QVTTMPEYLRRRFGGNRISITLAVL. A helical membrane pass occupies residues 149–169; sequence YLFIYIFTKISVDMYAGAIFI. The Extracellular segment spans residues 170–180; sequence QQSLHLDLYLA. Residues 181–201 form a helical membrane-spanning segment; that stretch reads IVGLLAITALYTVAGGLAAVI. Over 202 to 208 the chain is Cytoplasmic; sequence YTDALQT. A helical transmembrane segment spans residues 209–229; it reads VIMLIGAFILMGYSFAAVGGM. The Extracellular portion of the chain corresponds to 230–272; that stretch reads EGLKDQYFLALASNRSENSSCGLPREDAFHIFRDPLTSDLPWP. A helical transmembrane segment spans residues 273–293; the sequence is GILFGMSIPSLWYWCTDQVIV. Residues 294–308 are Cytoplasmic-facing; the sequence is QRSLAAKNLSHAKGG. Residues 309-329 traverse the membrane as a helical segment; sequence SLMAAYLKVLPLFLMVFPGMV. Residues 330–375 lie on the Extracellular side of the membrane; sequence SRVLFPDQVACAHPDICQRVCSNPSGCSDIAYPKLVLELLPTGLRG. The helical transmembrane segment at 376-396 threads the bilayer; it reads LMMAVMVAALMSSLTSIFNSA. The Cytoplasmic segment spans residues 397–418; the sequence is STIFTMDLWNHIRPRASERELM. The chain crosses the membrane as a helical span at residues 419–439; that stretch reads IVGRIFVFALVLVSILWIPIV. Residues 440 to 446 lie on the Extracellular side of the membrane; that stretch reads QASQGGQ. The helical transmembrane segment at 447–467 threads the bilayer; it reads LFIYIQSISSYLQPPVAMVFI. Residues 468 to 479 lie on the Cytoplasmic side of the membrane; it reads MGCFWKRTNEKG. Residues 480–500 traverse the membrane as a helical segment; sequence AFSGLILGLLLGLVRLILDFV. Over 501–521 the chain is Extracellular; it reads YAQPRCDQPDDRPAVVKDVHY. The helical transmembrane segment at 522 to 542 threads the bilayer; the sequence is LYFSMILSFTTLITVVTVSWF. The Cytoplasmic segment spans residues 543–652; sequence TETPSKEMVS…SLEENPLVKT (110 aa). A helical transmembrane segment spans residues 653-673; sequence LLDVNCIVCISCAIFLWGYFA.

It belongs to the sodium:solute symporter (SSF) (TC 2.A.21) family.

Its subcellular location is the membrane. It localises to the apical cell membrane. The catalysed reaction is myo-inositol(out) + 2 Na(+)(out) = myo-inositol(in) + 2 Na(+)(in). It catalyses the reaction 1D-chiro-inositol(out) + 2 Na(+)(out) = 1D-chiro-inositol(in) + 2 Na(+)(in). It carries out the reaction D-glucose(out) + 2 Na(+)(out) = D-glucose(in) + 2 Na(+)(in). The enzyme catalyses D-xylose(out) + 2 Na(+)(out) = D-xylose(in) + 2 Na(+)(in). MI transport activity inhibited by D-chiro-inositol (DCI), phlorizin (Pz) and sodium (Na(+)). Insulin increases D-chiro-inositol uptake. Functionally, involved in the sodium-dependent cotransport of myo-inositol (MI) with a Na(+):MI stoichiometry of 2:1. Exclusively responsible for apical MI transport and absorption in intestine. Can also transport D-chiro-inositol (DCI) but not L-fucose. Exhibits stereospecific cotransport of both D-glucose and D-xylose. May induce apoptosis through the TNF-alpha, PDCD1 pathway. May play a role in the regulation of MI concentration in serum, involving reabsorption in at least the proximal tubule of the kidney. This is Sodium/myo-inositol cotransporter 2 from Mus musculus (Mouse).